We begin with the raw amino-acid sequence, 278 residues long: MQLCYQNTQITKLVNNWHTQGKTVAFVPTMGGLHQGHLSLIDIAKQKADKVIVSIFVNPAQFSKNEDLDSYPRTINADLTALKVNVDGVFIPNIKQIYPKGISKYIDVGKIGQILCGRTRPHFFNGVAQVVEILFGIVRPDVAVFGQKDYQQLLVIKQMVKNLSLNICIESGEIIREKSGLAMSTRNQYLSKNEAKIATNLHKTLSYFKHEILQNKKVYVLNELAKLDLKQHFKIDYLEVLDANNLKQITDNTHQIVILSAVFLGSVRLIDNIIFKKG.

Residue 30 to 37 (MGGLHQGH) participates in ATP binding. Catalysis depends on His37, which acts as the Proton donor. A (R)-pantoate-binding site is contributed by Gln61. Gln61 lines the beta-alanine pocket. Residue 146–149 (GQKD) participates in ATP binding. Gln152 lines the (R)-pantoate pocket. Residues Ile175 and 183 to 186 (MSTR) contribute to the ATP site.

This sequence belongs to the pantothenate synthetase family. In terms of assembly, homodimer.

The protein resides in the cytoplasm. It catalyses the reaction (R)-pantoate + beta-alanine + ATP = (R)-pantothenate + AMP + diphosphate + H(+). The protein operates within cofactor biosynthesis; (R)-pantothenate biosynthesis; (R)-pantothenate from (R)-pantoate and beta-alanine: step 1/1. Its function is as follows. Catalyzes the condensation of pantoate with beta-alanine in an ATP-dependent reaction via a pantoyl-adenylate intermediate. The chain is Pantothenate synthetase from Ruthia magnifica subsp. Calyptogena magnifica.